The sequence spans 346 residues: S-adenosylmethionine:tRNA ribosyltransferase-isomerase (346 aa).

It belongs to the QueA family. As to quaternary structure, monomer.

The protein resides in the cytoplasm. The catalysed reaction is 7-aminomethyl-7-carbaguanosine(34) in tRNA + S-adenosyl-L-methionine = epoxyqueuosine(34) in tRNA + adenine + L-methionine + 2 H(+). It functions in the pathway tRNA modification; tRNA-queuosine biosynthesis. Transfers and isomerizes the ribose moiety from AdoMet to the 7-aminomethyl group of 7-deazaguanine (preQ1-tRNA) to give epoxyqueuosine (oQ-tRNA). In Chloroherpeton thalassium (strain ATCC 35110 / GB-78), this protein is S-adenosylmethionine:tRNA ribosyltransferase-isomerase.